A 237-amino-acid chain; its full sequence is Pyridoxal phosphate homeostasis protein (237 aa).

N6-(pyridoxal phosphate)lysine is present on Lys-35.

This sequence belongs to the pyridoxal phosphate-binding protein YggS/PROSC family.

In terms of biological role, pyridoxal 5'-phosphate (PLP)-binding protein, which is involved in PLP homeostasis. This Haemophilus influenzae (strain ATCC 51907 / DSM 11121 / KW20 / Rd) protein is Pyridoxal phosphate homeostasis protein.